Reading from the N-terminus, the 69-residue chain is Large ribosomal subunit protein uL29 (69 aa).

It belongs to the universal ribosomal protein uL29 family.

This Staphylococcus saprophyticus subsp. saprophyticus (strain ATCC 15305 / DSM 20229 / NCIMB 8711 / NCTC 7292 / S-41) protein is Large ribosomal subunit protein uL29.